A 197-amino-acid chain; its full sequence is Putative peptidyl-prolyl cis-trans isomerase (197 aa).

Positions glycine 14–valine 195 constitute a PPIase cyclophilin-type domain.

The protein belongs to the cyclophilin-type PPIase family.

The catalysed reaction is [protein]-peptidylproline (omega=180) = [protein]-peptidylproline (omega=0). Its function is as follows. PPIases accelerate the folding of proteins. It catalyzes the cis-trans isomerization of proline imidic peptide bonds in oligopeptides. This is Putative peptidyl-prolyl cis-trans isomerase from Staphylococcus aureus (strain bovine RF122 / ET3-1).